Reading from the N-terminus, the 166-residue chain is Probable histone deacetylase complex subunit SAP18 (166 aa).

Residues 143–166 (GRRFNNREQGDRFDHRQRQRSPIR) are disordered. The segment covering 147 to 158 (NNREQGDRFDHR) has biased composition (basic and acidic residues).

The protein belongs to the SAP18 family. Interacts with SIN3 and histone deacetylase.

Acts in transcription repression. Involved in the tethering of the SIN3 complex to core histone proteins. The chain is Probable histone deacetylase complex subunit SAP18 from Caenorhabditis elegans.